The chain runs to 437 residues: Trigger factor (437 aa).

Positions 163–248 (GHMVTIDYAF…LNEIKRKELP (86 aa)) constitute a PPIase FKBP-type domain.

The protein belongs to the FKBP-type PPIase family. Tig subfamily.

The protein resides in the cytoplasm. It catalyses the reaction [protein]-peptidylproline (omega=180) = [protein]-peptidylproline (omega=0). In terms of biological role, involved in protein export. Acts as a chaperone by maintaining the newly synthesized protein in an open conformation. Functions as a peptidyl-prolyl cis-trans isomerase. This Pelobacter propionicus (strain DSM 2379 / NBRC 103807 / OttBd1) protein is Trigger factor.